Reading from the N-terminus, the 405-residue chain is MRRTPAAERLSELGFPPRRGRQEPPFPLGVTRGWGGWPIEKRREGPRPVPFSERSPEDGREQPAHGSGILWRVRTRLSLCRDPEPPPPPPPLCLLRVSLLCALRAGGRGSRWGEDGAGLLLLPPAGASGSLKAERSSSTPYAGRMLENSGCKALKEGVLEKRSDGLLQLWKKKCCILTEEGLLLIPPKQLQQQQQQQQPGQGTAEPSQPSGPTVASLEPPVKLKELHFSNMKTVDCVERKGKYMYFTVVMTEGKEIDFRCPQDQGWNAEITLQMVQYKNRQAILAVKSTRQKQQHLVQQQPPQTQQIQPQPQPQIQPQPQPQIQPQPQPQPQPQPQPQPQPQPQQLHSYPHPHPHPYSHPHQHPHPHPHPHPHPHPHPYQLQHAHQPLHSQPQGHRLLRSTSNSA.

Basic and acidic residues-rich tracts occupy residues methionine 1–serine 11 and arginine 54–proline 63. Disordered regions lie at residues methionine 1–serine 67, glutamine 189–leucine 217, and glutamine 293–alanine 405. A PH domain is found at alanine 153–tyrosine 277. Residues glutamine 189–glycine 202 show a composition bias toward low complexity. Polar residues predominate over residues alanine 204–threonine 213. Residues glutamine 294 to proline 309 are compositionally biased toward low complexity. The interval proline 309–glutamine 344 is 16 X 2 AA repeats of P-Q. Over residues glutamine 310–glutamine 342 the composition is skewed to pro residues. The segment covering proline 350–proline 376 has biased composition (basic residues). Positions proline 354–histidine 377 are 11 X 2 AA repeats of P-H. Low complexity predominate over residues proline 378–histidine 389.

In terms of assembly, interacts with RPL14, EIF3S7 and PABPC4. As to expression, widely expressed with very high levels in adult liver and high levels in adult lung. According to PubMed:10428057 expressed at low levels in liver. Expressed at increased levels in atherosclerotic lesions observed in hyperhomocysteinema.

The protein localises to the cytoplasm. It localises to the cytoplasmic vesicle. It is found in the nucleus. Its subcellular location is the nucleolus. In terms of biological role, seems to be involved in regulation of apoptosis. May be involved in detachment-mediated programmed cell death. May mediate apoptosis during neuronal development. May be involved in regulation of anti-apoptotic effects of IGF1. Required for TCR-induced apoptosis and expression of TNFRSF6/FAS in a T-cell hybridoma cell line. May be involved in translational regulation. In Mus musculus (Mouse), this protein is Pleckstrin homology-like domain family A member 1 (Phlda1).